The chain runs to 157 residues: Lipoprotein signal peptidase (157 aa).

The next 4 membrane-spanning stretches (helical) occupy residues 10–30 (LVFIGVFFLIFGVDQAIKHAI), 36–56 (YESLMIDIVLVFNKGVAFSLL), 58–78 (FLEGGLKYLQILLILGLFIFL), and 84–104 (LFKNHAIEFGMVFGAGVSNVL). Residues Asp114 and Asp131 contribute to the active site. The helical transmembrane segment at 122–142 (FDFAIFNFADVMIDVGVGVLL) threads the bilayer.

The protein belongs to the peptidase A8 family.

The protein localises to the cell inner membrane. The catalysed reaction is Release of signal peptides from bacterial membrane prolipoproteins. Hydrolyzes -Xaa-Yaa-Zaa-|-(S,diacylglyceryl)Cys-, in which Xaa is hydrophobic (preferably Leu), and Yaa (Ala or Ser) and Zaa (Gly or Ala) have small, neutral side chains.. It functions in the pathway protein modification; lipoprotein biosynthesis (signal peptide cleavage). Functionally, this protein specifically catalyzes the removal of signal peptides from prolipoproteins. In Helicobacter pylori (strain P12), this protein is Lipoprotein signal peptidase.